Reading from the N-terminus, the 152-residue chain is Ribonuclease H (152 aa).

In terms of domain architecture, RNase H type-1 spans 1 to 142; it reads MDSKVVIYTD…ADKLAVQGRE (142 aa). Residues Asp10, Glu48, Asp70, and Asp134 each coordinate Mg(2+).

The protein belongs to the RNase H family. As to quaternary structure, monomer. Requires Mg(2+) as cofactor.

The protein localises to the cytoplasm. It carries out the reaction Endonucleolytic cleavage to 5'-phosphomonoester.. In terms of biological role, endonuclease that specifically degrades the RNA of RNA-DNA hybrids. This is Ribonuclease H from Rickettsia typhi (strain ATCC VR-144 / Wilmington).